Reading from the N-terminus, the 469-residue chain is DNA repair and recombination protein rad22 (469 aa).

Residues 265–296 are disordered; it reads PAANNHHSEKAGTQINNKDKGSHNSAKPVQRS. Residues 287–296 are compositionally biased toward polar residues; it reads HNSAKPVQRS. Residues Ser296 and Ser319 each carry the phosphoserine modification. The segment at 429-469 is disordered; it reads LHDSTTSHNKSDLMRTNSDPQSAMRSRENYDATVDKKAKKG. Residues 431-452 show a composition bias toward polar residues; the sequence is DSTTSHNKSDLMRTNSDPQSAM. A compositionally biased stretch (basic and acidic residues) spans 453 to 469; that stretch reads RSRENYDATVDKKAKKG.

The protein belongs to the RAD52 family. Interacts with rhp51.

It is found in the nucleus. In terms of biological role, active in the repair of DNA damage and in mating-type switching. Probably involved in the repair of DNA double-strands breaks. Has a role in promoting S phase completion. The chain is DNA repair and recombination protein rad22 (rad22) from Schizosaccharomyces pombe (strain 972 / ATCC 24843) (Fission yeast).